Consider the following 211-residue polypeptide: Histone H1t (211 aa).

Ala-1 is subject to N-acetylalanine. Over residues 1 to 16 (AETAPAAPADSVPASV) the composition is skewed to low complexity. The tract at residues 1-42 (AETAPAAPADSVPASVEKPPAKKRGKKPVGLTGTSRKAPSAS) is disordered. Polar residues predominate over residues 32–42 (TGTSRKAPSAS). One can recognise an H15 domain in the interval 39–112 (PSASVSKLIT…GASGSFKLSK (74 aa)). Citrulline is present on Arg-57. The disordered stretch occupies residues 101–211 (GTGASGSFKL…TNPRKATNRK (111 aa)). Basic residues predominate over residues 121-135 (GKVKKPAAAKTKKLV). Position 142 is a phosphoserine (Ser-142). The span at 147-156 (KANKRAKKSR) shows a compositional bias: basic residues. Thr-158 is subject to Phosphothreonine. Ser-166 and Ser-181 each carry phosphoserine. Basic residues predominate over residues 176–189 (KQQRKSPAKARAAK).

It belongs to the histone H1/H5 family. Post-translationally, phosphorylated in early spermatids. In terms of processing, citrullination at Arg-57 (H1R54ci) by PADI4 takes place within the DNA-binding site of H1 and results in its displacement from chromatin and global chromatin decondensation, thereby promoting pluripotency and stem cell maintenance. In terms of tissue distribution, testis-specific.

The protein resides in the nucleus. The protein localises to the chromosome. Testis-specific histone H1 that forms less compacted chromatin compared to other H1 histone subtypes. Formation of more relaxed chromatin may be required to promote chromatin architecture required for proper chromosome regulation during meiosis, such as homologous recombination. Histones H1 act as linkers that bind to nucleosomes and compact polynucleosomes into a higher-order chromatin configuration. This chain is Histone H1t, found in Sus scrofa (Pig).